The primary structure comprises 638 residues: Guanylate-binding protein 7 (638 aa).

The segment at 1–310 (MASEIHMPGP…DAINSGATPC (310 aa)) is GTPase domain (Globular). The GB1/RHD3-type G domain occupies 35–277 (TQPVVVVAIV…FCSYIFTHAK (243 aa)). GTP contacts are provided by residues 45–52 (GLYRTGKS), 67–69 (LGC), and 97–101 (DTEGL). Residues 311–638 (LENAMAVLAQ…LRNPGKKIIS (328 aa)) are interaction with the CYBA-CYBB complex. A C-terminal tail; required for its localization to cytoplasmic vesicle region spans residues 590–638 (PSVFSQILDVAGSIFIAALPGAAKLVDLGMKILSSLCNRLRNPGKKIIS).

This sequence belongs to the TRAFAC class dynamin-like GTPase superfamily. GB1/RHD3 GTPase family. GB1 subfamily. In terms of assembly, monomer and dimer. Interacts with CYBA, CYBA-CYBB complex and ATG4B. Interacts (via GB1/RHD3-type G domain) with NCF2 and NCF2-NCF4 complex.

It is found in the cytoplasmic vesicle membrane. The catalysed reaction is GTP + H2O = GDP + phosphate + H(+). The enzyme catalyses GDP + H2O = GMP + phosphate + H(+). Functionally, interferon (IFN)-inducible GTPase that plays important roles in innate immunity against a diverse range of bacterial, viral and protozoan pathogens. Hydrolyzes GTP to GMP in two consecutive cleavage reactions and predominantly uses GTP and not GDP or GMP as the substrate. Following infection, recruited to the pathogen-containing vacuoles or vacuole-escaped bacteria and acts as a positive regulator of inflammasome assembly by promoting the release of inflammasome ligands from bacteria. Acts by promoting lysis of pathogen-containing vacuoles, releasing pathogens into the cytosol. Following pathogen release in the cytosol, promotes recruitment of proteins that mediate bacterial cytolysis: this liberates ligands that are detected by inflammasomes, such as lipopolysaccharide (LPS) that activates the non-canonical CASP4/CASP11 inflammasome or double-stranded DNA (dsDNA) that activates the AIM2 inflammasome. Also promotes IFN-gamma-mediated host defense against bacterial infections by regulating oxidative responses and bacteriolytic peptide generation. May help to assemble NADPH oxidase on phagosomal membranes by acting as a bridging protein between NADPH oxidase cytosolic subunits NCF2-NCF4 and the membrane subunits CYBA-CYBB. Participates along with GBP1 in trafficking monoubiquinated protein cargo to autolysosomes for generating ubiquitin-derived antimicrobial peptides. Facilitates influenza A virus replication by inhibiting the activation of NF-kappaB and JAK-STAT signaling pathways and the expression of type I, type III interferons and pro-inflammatory cytokines. Confers protection to several pathogens, including the bacterial pathogens Listeria monocytogenes and Mycobacterium bovis BCG as well as the protozoan pathogen Toxoplasma gondii. Required for disruption of the parasitophorous vacuole formed following T.gondii infection and subsequent killing of the parasite. The protein is Guanylate-binding protein 7 (GBP7) of Homo sapiens (Human).